The sequence spans 240 residues: Probable transcriptional regulatory protein Nmul_A2722 (240 aa).

Belongs to the TACO1 family.

Its subcellular location is the cytoplasm. The protein is Probable transcriptional regulatory protein Nmul_A2722 of Nitrosospira multiformis (strain ATCC 25196 / NCIMB 11849 / C 71).